The chain runs to 95 residues: Probable dolichol-phosphate mannosyltransferase subunit 3 (95 aa).

2 helical membrane-spanning segments follow: residues 10-30 (AHVILFVLVWLLAYTDVVPVL) and 44-64 (APFFAVLFLGIYAVFNVVYGV).

This sequence belongs to the DPM3 family.

Its subcellular location is the endoplasmic reticulum membrane. It functions in the pathway protein modification; protein glycosylation. In terms of biological role, stabilizer subunit of the dolichol-phosphate-mannose synthase complex. This Caenorhabditis elegans protein is Probable dolichol-phosphate mannosyltransferase subunit 3 (dpm-3).